Here is a 68-residue protein sequence, read N- to C-terminus: Amphipathic peptide CT1 (68 aa).

The N-terminal stretch at 1 to 23 is a signal peptide; that stretch reads MKTQIVILIVAVLFLQLVSQSDA. The residue at position 36 (L36) is a Leucine amide. Residues 40–68 constitute a propeptide that is removed on maturation; that stretch reads GLKNLDQYNDLFDGEISDADIKFLKDLMR.

This sequence belongs to the non-disulfide-bridged peptide (NDBP) superfamily. Short antimicrobial peptide (group 4) family. In terms of tissue distribution, expressed by the venom gland.

It is found in the secreted. It localises to the target cell membrane. Functionally, amphipathic peptide that shows no antibacterial activity even at 50 uM but shows a low hemolytic activity against human erythrocytes. This is Amphipathic peptide CT1 from Mesomexovis subcristatus (Scorpion).